The primary structure comprises 101 residues: Protein translation factor SUI1 homolog (101 aa).

It belongs to the SUI1 family.

The polypeptide is Protein translation factor SUI1 homolog (Methanothermobacter thermautotrophicus (strain ATCC 29096 / DSM 1053 / JCM 10044 / NBRC 100330 / Delta H) (Methanobacterium thermoautotrophicum)).